Consider the following 385-residue polypeptide: Protein pelota homolog (385 aa).

It belongs to the eukaryotic release factor 1 family. Pelota subfamily. In terms of assembly, component of the Pelota-HBS1L complex, also named Dom34-Hbs1 complex, composed of PELO and HBS1L. Requires a divalent metal cation as cofactor.

It localises to the cytoplasm. In terms of biological role, component of the Pelota-HBS1L complex, a complex that recognizes stalled ribosomes and triggers the No-Go Decay (NGD) pathway. In the Pelota-HBS1L complex, PELO recognizes ribosomes stalled at the 3' end of an mRNA and engages stalled ribosomes by destabilizing mRNA in the mRNA channel. Following mRNA extraction from stalled ribosomes by the SKI complex, the Pelota-HBS1L complex promotes recruitment of ABCE1, which drives the disassembly of stalled ribosomes, followed by degradation of damaged mRNAs as part of the NGD pathway. The protein is Protein pelota homolog (pelo) of Danio rerio (Zebrafish).